A 51-amino-acid polypeptide reads, in one-letter code: U-Asilidin(1)-Mar1a (51 aa).

Positions 1-23 are cleaved as a signal peptide; the sequence is MANYIEVFSVLAIIFATVLAALA. 3 disulfide bridges follow: Cys26–Cys40, Cys33–Cys44, and Cys39–Cys49.

Belongs to the asilidin-1 family. In terms of tissue distribution, expressed by the venom gland. Is the most highly expressed peptide and is around 3000 times higher expressed in the thoracic glands compared to its body tissues.

The protein resides in the secreted. Functionally, induces neurotoxic effect on honeybees, including slow movements, disorientation and paralysis. Since it provokes similar symptoms than omega-atracotoxin, it is probable that it acts in the same way by inhibiting voltage-gated calcium channels. The chain is U-Asilidin(1)-Mar1a from Machimus arthriticus (Breck robberfly).